The sequence spans 1010 residues: Signal peptide, CUB and EGF-like domain-containing protein 2 (1010 aa).

A signal peptide spans 1–24 (MGAVWTVRLLCLFLLLLNTRQSAA). Residues 28 to 68 (NTDQCAEGSDACHIDAICQNTPTSYKCTCKTGFKGDGKHCE) enclose the EGF-like 1; calcium-binding domain. 8 cysteine pairs are disulfide-bonded: Cys32-Cys45, Cys39-Cys54, Cys56-Cys67, Cys73-Cys85, Cys81-Cys94, Cys96-Cys109, Cys115-Cys126, and Cys122-Cys135. An EGF-like 2; calcium-binding domain is found at 69-110 (DIDECDVEYNGGCVHECNNIPGNYRCTCLDGFHLAHDGHNCL). An EGF-like 3; calcium-binding domain is found at 111–147 (DVDECVFNNGGCQHVCVNTMGSYECRCKQGFFLSDNQ). EGF-like domains follow at residues 160 to 196 (CMNK…QRGC) and 200 to 235 (CNHG…GRTC). The N-linked (GlcNAc...) asparagine glycan is linked to Asn249. The region spanning 269 to 304 (CAVNNGGCDSTCKDTSTGVRCSCPVGFTLQPDGKSC) is the EGF-like 6 domain. Residues 306–346 (DIDECELHNGGCDHYCRNTIGSFECSCRKGFKLLTDERSCQ) enclose the EGF-like 7; calcium-binding domain. 9 disulfide bridges follow: Cys310-Cys321, Cys317-Cys330, Cys332-Cys345, Cys351-Cys361, Cys357-Cys370, Cys372-Cys384, Cys390-Cys401, Cys397-Cys410, and Cys412-Cys425. One can recognise an EGF-like 8; calcium-binding domain in the interval 347-385 (DIDECFFERTCDHTCVNSPGSFQCVCNKGYTLYGLAHCG). The 41-residue stretch at 386-426 (DINECSFNNGGCEHTCENTMGSFGCHCRAGYKLHWNKKDCI) folds into the EGF-like 9; calcium-binding domain. N-linked (GlcNAc...) asparagine glycosylation is found at Asn488, Asn703, Asn774, and Asn803. Cysteines 822 and 848 form a disulfide. The 113-residue stretch at 822-934 (CGGELGEFTG…KGFQVPYVTY (113 aa)) folds into the CUB domain. Residues 860–869 (ILVVVPEIYL) are interaction with the cholesterol-anchor of SHH. Residues Cys875 and Cys896 are joined by a disulfide bond. N-linked (GlcNAc...) asparagine glycosylation occurs at Asn982.

As to quaternary structure, interacts with SHH via the cholesterol anchor of the dually lipid-modified SHH (ShhNp). Interacts with PTCH1. Forms homooligomers and heterooligomers with SCUBE1 and SCUBE3. Interacts with VEGFR2. N-glycosylated.

The protein localises to the secreted. The protein resides in the cell surface. Its function is as follows. Lipid-binding protein required for SHH long-range signaling by binding to the dually lipid-modified SHH (ShhNp) and by promoting ShhNp mobilization, solubilization and release from the cell membrane. Acts by enhancing the proteolytic processing (shedding) of the lipid-modified N- and C- terminal of ShhNp at the cell surface. Synergizes with DISP1 to cause an increase in SHH secretion. Probable cell surface coreceptor for VEGFR2 involved in VEGFR2-mediated angiogenesis. This chain is Signal peptide, CUB and EGF-like domain-containing protein 2 (scube2), found in Danio rerio (Zebrafish).